Here is a 181-residue protein sequence, read N- to C-terminus: ATP synthase subunit delta (181 aa).

This sequence belongs to the ATPase delta chain family. As to quaternary structure, F-type ATPases have 2 components, F(1) - the catalytic core - and F(0) - the membrane proton channel. F(1) has five subunits: alpha(3), beta(3), gamma(1), delta(1), epsilon(1). F(0) has three main subunits: a(1), b(2) and c(10-14). The alpha and beta chains form an alternating ring which encloses part of the gamma chain. F(1) is attached to F(0) by a central stalk formed by the gamma and epsilon chains, while a peripheral stalk is formed by the delta and b chains.

It is found in the cell membrane. F(1)F(0) ATP synthase produces ATP from ADP in the presence of a proton or sodium gradient. F-type ATPases consist of two structural domains, F(1) containing the extramembraneous catalytic core and F(0) containing the membrane proton channel, linked together by a central stalk and a peripheral stalk. During catalysis, ATP synthesis in the catalytic domain of F(1) is coupled via a rotary mechanism of the central stalk subunits to proton translocation. Its function is as follows. This protein is part of the stalk that links CF(0) to CF(1). It either transmits conformational changes from CF(0) to CF(1) or is implicated in proton conduction. This chain is ATP synthase subunit delta, found in Clostridium kluyveri (strain NBRC 12016).